The following is a 964-amino-acid chain: MPDDKRAKPEKSKYPVNLLDTPFPMRGDLPKREPQWVKQWQDKQLYKKIRAARKGAKKFVLHDGPPYANGDIHIGHAVNKVLKDMIIKARGLTGLDAVYVPGWDCHGMPIEIQIEKKFGKGLPVQEVQAKARAYATEQIKRQMMDFERLGVLGDWDHPYLTMNYSNEADELRALGKIMEKGYVFRGLKPVNWCFDCGSALAEAEVEYKDKVDLSIDVGFPFAQADKLAHAFKVPFEQLDGKPGWIVIWTTTPWTIPSNQALNVHPEVEYALVETPRGYLILATERVEEQLKVYGLEGKVVATTTGAALSEIRFHHPLAKMDAGYDRLSPVYLGDYVTTDTGSGIVHSAPAYGVEDFQSCKAHGMADSDIISPVMGNGVYAGTLPLFGGLSIWDANPKIVEVLQASGNLFNSHKYTHSYMHCWRHKTPIIYRATSQWFAGMDVDPADENGKTGPTLRETALAGIDATEFFPAWGKQRLHNMIANRPDWTLSRQRQWGVPMAFFLHKETGALHPRTPQLLEEVARRVEQHGIEAWQTLDPAELLGDEASQYEKNRDTLDVWFDSGTTHWSVIRGSHRDDLYDPSADEADGRLADLYLEGSDQHRGWFHSSLLTASMLYGKPPYKALLTHGFTVDGEGRKMSKSIGNTVSPQDISNKMGAEIIRLWVASTDYSGELSISDEILKRVVEGYRRIRNTLRFLLSNLSDYDHARHALPASEWLEIDRYAVALTAQLQKEVLSHYEAYEFHPVVSKLQTFCSEDLGGFYLDVLKDRLYTTAPDSKARRAAQNALYHITQAMLHWMAPFLSFTAEEAWQIFAHGTEHTDTIFTSTYYAIPEVDDGADDLLQKWHTLREVRAEVTKQLEAVRVEGEIGSSLQAELTIQAGGPVLDALQSLGDDLRFVLLTSSAKVTHAPEAGDLLVTVTPSTHAKCERCWHYRADVGHNPDHPTLCGRCDSNLFGAGEHRSHA.

The 'HIGH' region signature appears at 66 to 76 (PYANGDIHIGH). Glu596 is an L-isoleucyl-5'-AMP binding site. A 'KMSKS' region motif is present at residues 637-641 (KMSKS). ATP is bound at residue Lys640. Residues Cys927, Cys930, Cys947, and Cys950 each contribute to the Zn(2+) site.

The protein belongs to the class-I aminoacyl-tRNA synthetase family. IleS type 1 subfamily. As to quaternary structure, monomer. It depends on Zn(2+) as a cofactor.

The protein localises to the cytoplasm. It carries out the reaction tRNA(Ile) + L-isoleucine + ATP = L-isoleucyl-tRNA(Ile) + AMP + diphosphate. Catalyzes the attachment of isoleucine to tRNA(Ile). As IleRS can inadvertently accommodate and process structurally similar amino acids such as valine, to avoid such errors it has two additional distinct tRNA(Ile)-dependent editing activities. One activity is designated as 'pretransfer' editing and involves the hydrolysis of activated Val-AMP. The other activity is designated 'posttransfer' editing and involves deacylation of mischarged Val-tRNA(Ile). This is Isoleucine--tRNA ligase from Cupriavidus necator (strain ATCC 17699 / DSM 428 / KCTC 22496 / NCIMB 10442 / H16 / Stanier 337) (Ralstonia eutropha).